A 318-amino-acid polypeptide reads, in one-letter code: Glycine--tRNA ligase alpha subunit (318 aa).

Residues 298–318 form a disordered region; it reads EAGGSSPSTSRQGEAPRGESQ. Residues 300-309 show a composition bias toward polar residues; that stretch reads GGSSPSTSRQ.

It belongs to the class-II aminoacyl-tRNA synthetase family. In terms of assembly, tetramer of two alpha and two beta subunits.

The protein resides in the cytoplasm. It catalyses the reaction tRNA(Gly) + glycine + ATP = glycyl-tRNA(Gly) + AMP + diphosphate. The polypeptide is Glycine--tRNA ligase alpha subunit (Rhodopseudomonas palustris (strain BisB18)).